The following is a 147-amino-acid chain: Large ribosomal subunit protein bL9 (147 aa).

The protein belongs to the bacterial ribosomal protein bL9 family.

Its function is as follows. Binds to the 23S rRNA. This is Large ribosomal subunit protein bL9 from Campylobacter jejuni subsp. jejuni serotype O:6 (strain 81116 / NCTC 11828).